Here is a 437-residue protein sequence, read N- to C-terminus: Epsilon-sarcoglycan (437 aa).

Over 1–317 (MLLFWWWELG…LKSRDYYTDF (317 aa)) the chain is Extracellular. A glycan (N-linked (GlcNAc...) asparagine) is linked at N200. Residues 318-338 (LVTLAVPSAVALVLFLILAYI) form a helical membrane-spanning segment. At 339–437 (MCCRREGVEK…QPQTTGKWYP (99 aa)) the chain is on the cytoplasmic side.

It belongs to the sarcoglycan alpha/epsilon family. In terms of processing, N-glycosylated. Post-translationally, ubiquitinated, leading to its degradation by the proteasome. Identified in all tissues tested. Expression highest in lung and placenta, moderate in brain, heart and skeletal muscle, low in kidney and liver. Also detected in embryo.

The protein resides in the cell membrane. It is found in the sarcolemma. The protein localises to the golgi apparatus. It localises to the cell projection. Its subcellular location is the dendrite. The protein resides in the cytoplasm. It is found in the cytoskeleton. Functionally, component of the sarcoglycan complex, a subcomplex of the dystrophin-glycoprotein complex which forms a link between the F-actin cytoskeleton and the extracellular matrix. This is Epsilon-sarcoglycan (Sgce) from Mus musculus (Mouse).